The following is a 127-amino-acid chain: Anti-adapter protein IraD (127 aa).

It belongs to the GpW/Gp25 family. IraD subfamily. Interacts with RssB.

It is found in the cytoplasm. Inhibits RpoS proteolysis by regulating RssB activity, thereby increasing the stability of the sigma stress factor RpoS during oxidative stress. Its effect on RpoS stability is due to its interaction with RssB, which probably blocks the interaction of RssB with RpoS, and the consequent delivery of the RssB-RpoS complex to the ClpXP protein degradation pathway. The protein is Anti-adapter protein IraD of Escherichia coli O127:H6 (strain E2348/69 / EPEC).